The sequence spans 871 residues: Protein translocase subunit SecA (871 aa).

Residues Q80, 98–102, and D537 each bind ATP; that span reads GEGKT. A disordered region spans residues 852–871; that stretch reads MEKGKKKGGSHGLGKIRVKR. The span at 855–871 shows a compositional bias: basic residues; the sequence is GKKKGGSHGLGKIRVKR.

It belongs to the SecA family. In terms of assembly, monomer and homodimer. Part of the essential Sec protein translocation apparatus which comprises SecA, SecYEG and auxiliary proteins SecDF. Other proteins may also be involved.

The protein localises to the cell inner membrane. It is found in the cytoplasm. It carries out the reaction ATP + H2O + cellular proteinSide 1 = ADP + phosphate + cellular proteinSide 2.. Part of the Sec protein translocase complex. Interacts with the SecYEG preprotein conducting channel. Has a central role in coupling the hydrolysis of ATP to the transfer of proteins into and across the cell membrane, serving as an ATP-driven molecular motor driving the stepwise translocation of polypeptide chains across the membrane. The protein is Protein translocase subunit SecA of Thermotoga neapolitana (strain ATCC 49049 / DSM 4359 / NBRC 107923 / NS-E).